A 277-amino-acid chain; its full sequence is Polar tube protein 2 (277 aa).

Positions 1–18 (MLLLLAITAVVSATMVHP) are cleaved as a signal peptide. Asn-134 is a glycosylation site (N-linked (GlcNAc...) asparagine). The span at 237–251 (QKKEVKDTKEGEKSA) shows a compositional bias: basic and acidic residues. Residues 237–277 (QKKEVKDTKEGEKSASQDSDGEGTAEDAEVQQPSADGEGLE) form a disordered region. Residues 255–265 (SDGEGTAEDAE) are compositionally biased toward acidic residues.

Interacts with PTP1 and PTP3.

Its subcellular location is the spore polar tube. Involved in formation of a polar tube through which the infectious agent is passed on to the host cell. The chain is Polar tube protein 2 (PTP2) from Encephalitozoon cuniculi (strain GB-M1) (Microsporidian parasite).